The following is a 27-amino-acid chain: Superoxide dismutase [Mn] (27 aa).

The protein belongs to the iron/manganese superoxide dismutase family. As to quaternary structure, homodimer. Mn(2+) is required as a cofactor.

It catalyses the reaction 2 superoxide + 2 H(+) = H2O2 + O2. In terms of biological role, destroys superoxide anion radicals which are normally produced within the cells and which are toxic to biological systems. The sequence is that of Superoxide dismutase [Mn] (sodA) from Desulfovibrio desulfuricans.